Reading from the N-terminus, the 617-residue chain is MHSPGAAAYVFLQCLVALVAAVIAQSGADQPPTTVVEVTAHGSVSMTPPTPRSPLLNETELVELNQPGSTAVFVALPTNPPTVSVDSSSTTTVASTQEPTSTTERTMSPEEIQKLLLPPATVEADILHVNATDDNRPDAKSSGKDSECPTLEGADHLSQTQLLTRLTHVCRYDRLERPKRESINGTNGPVKVYARAYIYFMQNLEAHDLQFKIHALLQFRYVDPRLVFREVAPNRTKPIMGEQSLRDLLWVPHVFLANERSSDILGTAEKDILTSISPDGTVIVSTRISATLYCWMNLQKFPFDEQHCSTVLESWMYNEDDLVLLWEHKSPVTLAPELHLTEYVLLEMFTNETVINADLSDLRHGAFAGNYSSLSFTVHLAREMGFYMMDYFIPSIMLVAISWVTFWLQADQSAPRITLGTSTMLTFITLASAQGKTLPKVSYIKASEIWFLGCTGFIFGSLVEFAFVNTIWRRKRNVEVKKVNSKHVLKQAITPRPARKDMSGLHKSHSCTSLADSATTVSANSFNNYLTVHSIPQKSPSSATLPIISTTDVDRAMTEASNVTIQIEGQTSNVNGNGWTTMTPQEVAIWIDKRSRFVFPIAFVIFNIFYWTFVYYV.

A signal peptide spans 1 to 28 (MHSPGAAAYVFLQCLVALVAAVIAQSGA). Residues 29–387 (DQPPTTVVEV…VHLAREMGFY (359 aa)) are Extracellular-facing. N-linked (GlcNAc...) asparagine glycosylation is present at N57. Positions 82 to 96 (TVSVDSSSTTTVAST) are enriched in low complexity. The segment at 82–110 (TVSVDSSSTTTVASTQEPTSTTERTMSPE) is disordered. Residues 97 to 106 (QEPTSTTERT) show a composition bias toward polar residues. N130 carries an N-linked (GlcNAc...) asparagine glycan. Basic and acidic residues predominate over residues 131–147 (ATDDNRPDAKSSGKDSE). Residues 131-155 (ATDDNRPDAKSSGKDSECPTLEGAD) are disordered. 4 N-linked (GlcNAc...) asparagine glycosylation sites follow: N184, N234, N351, and N370. The helical transmembrane segment at 388–408 (MMDYFIPSIMLVAISWVTFWL) threads the bilayer. Topologically, residues 409 to 414 (QADQSA) are cytoplasmic. Residues 415–434 (PRITLGTSTMLTFITLASAQ) form a helical membrane-spanning segment. The Extracellular segment spans residues 435-447 (GKTLPKVSYIKAS). Residues 448–468 (EIWFLGCTGFIFGSLVEFAFV) traverse the membrane as a helical segment. Over 469–596 (NTIWRRKRNV…VAIWIDKRSR (128 aa)) the chain is Cytoplasmic. The chain crosses the membrane as a helical span at residues 597-617 (FVFPIAFVIFNIFYWTFVYYV).

Belongs to the ligand-gated ion channel (TC 1.A.9) family.

Its subcellular location is the cell membrane. It catalyses the reaction chloride(in) = chloride(out). In terms of biological role, ligand and pH-gated channel that mediates chloride transport in the mid-gut and thereby may function in larval metabolism and fluid homeostasis. Channel opening is triggered by zinc binding or, to a lesser extent, an increase in extracellular pH. This is pH-sensitive chloride channel 2 from Anopheles gambiae (African malaria mosquito).